The following is a 571-amino-acid chain: Kinesin light chain (571 aa).

A coiled-coil region spans residues 54 to 160 (LLTSMKTIRK…KKHLEFMNEM (107 aa)). Over residues 167-177 (EAQVNEEKESE) the composition is skewed to basic and acidic residues. The interval 167–210 (EAQVNEEKESEQSSLDLGFPDDDDDGGQPEVLSPTQPSAMAQAA) is disordered. TPR repeat units lie at residues 220–253 (LRTL…LEKT), 262–295 (ATML…REKT), 304–337 (AATL…REKV), 346–379 (AKQL…YQKE), 388–421 (AKTK…AHEK), and 471–504 (TTTL…RKSA). A disordered region spans residues 518–571 (GSDFSKGQSPKDRKRSNSRDRNRRDSMDSVSYEKSGDGDEHEKSKLHVGTSHKQ). Composition is skewed to basic and acidic residues over residues 526-544 (SPKD…RDSM) and 551-562 (KSGDGDEHEKSK).

This sequence belongs to the kinesin light chain family. In terms of assembly, oligomeric complex composed of two heavy chains and two light chains.

The protein localises to the cytoplasm. The protein resides in the cytoskeleton. Functionally, kinesin is a microtubule-associated force-producing protein that may play a role in organelle transport. The light chain may function in coupling of cargo to the heavy chain or in the modulation of its ATPase activity. The protein is Kinesin light chain of Doryteuthis pealeii (Longfin inshore squid).